We begin with the raw amino-acid sequence, 113 residues long: Early nodulin-12B (113 aa).

An N-terminal signal peptide occupies residues 1 to 24 (MASFSLSILVFFISALVLVPQGFA). The segment at 29–113 (NPAYRPPQTK…HPPAEDNIHF (85 aa)) is disordered. Over residues 32–42 (YRPPQTKPPVN) the composition is skewed to pro residues. 2 consecutive repeat copies span residues 34 to 38 (PPQTK) and 39 to 43 (PPVNK). The tract at residues 34–109 (PPQTKPPVNK…PTHKHPPAED (76 aa)) is 15 X 5 AA approximate tandem repeats of P-P-[QVHRTA]-[NHKE]-[KEDT]. A 3; approximate repeat occupies 44–48 (PSHKE). Basic and acidic residues-rich tracts occupy residues 45-60 (SHKEPPVHKPPHKEPP) and 67-113 (KEPP…NIHF). Repeat copies occupy residues 49–53 (PPVHK), 54–58 (PPHKE), and 59–63 (PPVNK). Residues 64–68 (PRHKE) form a 7; approximate repeat. 4 repeat units span residues 69 to 73 (PPVHK), 74 to 78 (PPHKD), 79 to 83 (PPVNK), and 84 to 88 (PPQKE). The 12; approximate repeat unit spans residues 89–93 (SPVHK). Tandem repeats lie at residues 94–98 (PPRKE), 99–103 (PPTHK), and 105–109 (PPAED).

It belongs to the plant proline-rich protein superfamily. ENOD12 family. Expressed only in young nodules.

The protein localises to the secreted. The protein resides in the cell wall. Its function is as follows. Involved in the infection process during the plant-rhizobium interaction. The chain is Early nodulin-12B (ENOD12B) from Medicago sativa (Alfalfa).